The following is a 179-amino-acid chain: Pyridoxal 5'-phosphate synthase subunit PdxT (179 aa).

Residue 48-50 participates in L-glutamine binding; the sequence is GES. The active-site Nucleophile is cysteine 79. Residues arginine 101 and 127–128 contribute to the L-glutamine site; that span reads IR. Residues histidine 163 and glutamate 165 each act as charge relay system in the active site.

The protein belongs to the glutaminase PdxT/SNO family. In terms of assembly, in the presence of PdxS, forms a dodecamer of heterodimers. Only shows activity in the heterodimer.

It carries out the reaction aldehydo-D-ribose 5-phosphate + D-glyceraldehyde 3-phosphate + L-glutamine = pyridoxal 5'-phosphate + L-glutamate + phosphate + 3 H2O + H(+). It catalyses the reaction L-glutamine + H2O = L-glutamate + NH4(+). Its pathway is cofactor biosynthesis; pyridoxal 5'-phosphate biosynthesis. Functionally, catalyzes the hydrolysis of glutamine to glutamate and ammonia as part of the biosynthesis of pyridoxal 5'-phosphate. The resulting ammonia molecule is channeled to the active site of PdxS. This is Pyridoxal 5'-phosphate synthase subunit PdxT from Francisella tularensis subsp. novicida (strain U112).